Reading from the N-terminus, the 88-residue chain is Cell division topological specificity factor (88 aa).

The protein belongs to the MinE family.

Functionally, prevents the cell division inhibition by proteins MinC and MinD at internal division sites while permitting inhibition at polar sites. This ensures cell division at the proper site by restricting the formation of a division septum at the midpoint of the long axis of the cell. This Salmonella agona (strain SL483) protein is Cell division topological specificity factor.